The sequence spans 240 residues: uncharacterized protein (240 aa).

This is an uncharacterized protein from Bacillus subtilis (strain 168).